The sequence spans 179 residues: Auxin-induced protein IAA6 (179 aa).

The EAR-like (transcriptional repression) signature appears at 13 to 17 (LRLGL). Residues 31-52 (FSEIDGGVEENGGSGDRKSVDK) form a disordered region. In terms of domain architecture, PB1 spans 75-163 (KMYMKVSMDG…KRLRIMKRSD (89 aa)).

This sequence belongs to the Aux/IAA family. In terms of assembly, homodimers and heterodimers.

Its subcellular location is the nucleus. In terms of biological role, aux/IAA proteins are short-lived transcriptional factors that function as repressors of early auxin response genes at low auxin concentrations. Repression is thought to result from the interaction with auxin response factors (ARFs), proteins that bind to the auxin-responsive promoter element (AuxRE). Formation of heterodimers with ARF proteins may alter their ability to modulate early auxin response genes expression. The sequence is that of Auxin-induced protein IAA6 (IAA6) from Pisum sativum (Garden pea).